The following is a 293-amino-acid chain: Protein PET54 (293 aa).

It localises to the mitochondrion inner membrane. Functionally, activator of specific mitochondrial mRNAs. PET54 is involved in the excision of intron aI5-beta from pre-mRNA for cytochrome c oxidase I (COX1) and plays a role in promoting the translation of COX3. This is Protein PET54 (PET54) from Saccharomyces cerevisiae (strain ATCC 204508 / S288c) (Baker's yeast).